The primary structure comprises 306 residues: Glutamyl-Q tRNA(Asp) synthetase (306 aa).

L-glutamate contacts are provided by residues 4–8 (RYAPS) and Glu40. Positions 7-17 (PSPSGDLHFGN) match the 'HIGH' region motif. Residues Cys92, Cys94, Tyr113, and Cys117 each contribute to the Zn(2+) site. L-glutamate contacts are provided by Tyr180 and Arg198. Residues 236-240 (RLAKR) carry the 'KMSKS' region motif. Lys239 contributes to the ATP binding site.

Belongs to the class-I aminoacyl-tRNA synthetase family. GluQ subfamily. It depends on Zn(2+) as a cofactor.

Its function is as follows. Catalyzes the tRNA-independent activation of glutamate in presence of ATP and the subsequent transfer of glutamate onto a tRNA(Asp). Glutamate is transferred on the 2-amino-5-(4,5-dihydroxy-2-cyclopenten-1-yl) moiety of the queuosine in the wobble position of the QUC anticodon. In Corynebacterium efficiens (strain DSM 44549 / YS-314 / AJ 12310 / JCM 11189 / NBRC 100395), this protein is Glutamyl-Q tRNA(Asp) synthetase.